The sequence spans 118 residues: Small ribosomal subunit protein uS13 (118 aa).

Residues 91 to 118 are disordered; that stretch reads HRRSLPVRGQRTKTNARTRKGPRKPIKA.

It belongs to the universal ribosomal protein uS13 family. In terms of assembly, part of the 30S ribosomal subunit. Forms a loose heterodimer with protein S19. Forms two bridges to the 50S subunit in the 70S ribosome.

In terms of biological role, located at the top of the head of the 30S subunit, it contacts several helices of the 16S rRNA. In the 70S ribosome it contacts the 23S rRNA (bridge B1a) and protein L5 of the 50S subunit (bridge B1b), connecting the 2 subunits; these bridges are implicated in subunit movement. Contacts the tRNAs in the A and P-sites. This is Small ribosomal subunit protein uS13 from Francisella philomiragia subsp. philomiragia (strain ATCC 25017 / CCUG 19701 / FSC 153 / O#319-036).